The sequence spans 250 residues: 2,5-dichloro-2,5-cyclohexadiene-1,4-diol dehydrogenase LinX (250 aa).

Residues D38, D64, V65, Y156, K160, T191, and T194 each contribute to the NAD(+) site. The active-site Proton acceptor is the Y156.

This sequence belongs to the short-chain dehydrogenases/reductases (SDR) family.

It catalyses the reaction 2,5-dichlorocyclohexa-2,5-dien-1,4-diol + NAD(+) = 2,5-dichlorohydroquinone + NADH + H(+). Functionally, catalyzes the degradation of 2,5-dichloro-2,5-cyclohexadiene-1,4-diol (2,5-DDOL) into 2,5-dichlorohydroquinone (2,5-DCHQ) in vitro. LinX appears not to be involved in gamma-hexachlorocyclohexane (gamma-HCH) degradation pathway, in contrast to LinC which has the same enzymatic activity. This chain is 2,5-dichloro-2,5-cyclohexadiene-1,4-diol dehydrogenase LinX, found in Sphingobium indicum (strain DSM 16412 / CCM 7286 / MTCC 6364 / B90A).